Consider the following 347-residue polypeptide: Glutamyl-Q tRNA(Asp) synthetase (347 aa).

L-glutamate is bound by residues 31 to 35 (RFAPS) and E67. The 'HIGH' region signature appears at 34–44 (PSPTSALHLGN). Positions 121, 123, 143, and 147 each coordinate Zn(2+). L-glutamate-binding residues include Y203 and R221. Residues 259-263 (RLSKS) carry the 'KMSKS' region motif. K262 is a binding site for ATP.

This sequence belongs to the class-I aminoacyl-tRNA synthetase family. GluQ subfamily. It depends on Zn(2+) as a cofactor.

Its function is as follows. Catalyzes the tRNA-independent activation of glutamate in presence of ATP and the subsequent transfer of glutamate onto a tRNA(Asp). Glutamate is transferred on the 2-amino-5-(4,5-dihydroxy-2-cyclopenten-1-yl) moiety of the queuosine in the wobble position of the QUC anticodon. In Cutibacterium acnes (strain DSM 16379 / KPA171202) (Propionibacterium acnes), this protein is Glutamyl-Q tRNA(Asp) synthetase.